A 548-amino-acid polypeptide reads, in one-letter code: Chaperonin GroEL (548 aa).

ATP is bound by residues 29–32, Lys50, 86–90, Gly414, 478–480, and Asp494; these read TLGP, DGTTT, and NAA.

It belongs to the chaperonin (HSP60) family. Forms a cylinder of 14 subunits composed of two heptameric rings stacked back-to-back. Interacts with the co-chaperonin GroES.

It localises to the cytoplasm. The catalysed reaction is ATP + H2O + a folded polypeptide = ADP + phosphate + an unfolded polypeptide.. Functionally, together with its co-chaperonin GroES, plays an essential role in assisting protein folding. The GroEL-GroES system forms a nano-cage that allows encapsulation of the non-native substrate proteins and provides a physical environment optimized to promote and accelerate protein folding. The sequence is that of Chaperonin GroEL from Alcanivorax borkumensis (strain ATCC 700651 / DSM 11573 / NCIMB 13689 / SK2).